The following is a 145-amino-acid chain: Large ribosomal subunit protein uL13 (145 aa).

The protein belongs to the universal ribosomal protein uL13 family. Part of the 50S ribosomal subunit.

This protein is one of the early assembly proteins of the 50S ribosomal subunit, although it is not seen to bind rRNA by itself. It is important during the early stages of 50S assembly. The chain is Large ribosomal subunit protein uL13 from Bacillus cytotoxicus (strain DSM 22905 / CIP 110041 / 391-98 / NVH 391-98).